The sequence spans 146 residues: Leghemoglobin 1 (146 aa).

One can recognise a Globin domain in the interval 2 to 146 (GFTEKQEALV…LAAAIKKAMG (145 aa)). Nitrated tyrosine is present on Tyr-29. Ser-44 lines the heme b pocket. The residue at position 44 (Ser-44) is a Phosphoserine. His-61 is a binding site for O2. Residues Lys-64, His-93, and Lys-96 each coordinate heme b. A Nitrated tyrosine modification is found at Tyr-134.

It belongs to the plant globin family. Monomer. Nitrated in effective nodules and particularly in hypoxic conditions; this mechanism may play a protective role in the symbiosis by buffering toxic peroxynitrite NO(2)(-). Nitration level decrease during nodule senescence. In terms of processing, phosphorylation at Ser-44 disrupts the molecular environment of its porphyrin ring oxygen binding pocket, thus leading to a reduced oxygen consumption and to the delivery of oxygen O(2) to symbiosomes. Root nodules.

The protein resides in the cytoplasm. It localises to the cytosol. It is found in the nucleus. In terms of biological role, leghemoglobin that reversibly binds oxygen O(2) through a pentacoordinated heme iron. In root nodules, facilitates the diffusion of oxygen to the bacteroids while preventing the bacterial nitrogenase from being inactivated by buffering dioxygen, nitric oxide and carbon monoxide, and promoting the formation of reactive oxygen species (ROS, e.g. H(2)O(2)). This role is essential for symbiotic nitrogen fixation (SNF). This chain is Leghemoglobin 1, found in Medicago truncatula (Barrel medic).